The sequence spans 255 residues: Large ribosomal subunit protein uL2 (255 aa).

The disordered stretch occupies residues 201–229 (YAHPHGGGSHQQGGTPVKKNAPPGQKVGF).

It belongs to the universal ribosomal protein uL2 family. Part of the 50S ribosomal subunit. Forms a bridge to the 30S subunit in the 70S ribosome.

Functionally, one of the primary rRNA binding proteins. Required for association of the 30S and 50S subunits to form the 70S ribosome, for tRNA binding and peptide bond formation. It has been suggested to have peptidyltransferase activity; this is somewhat controversial. Makes several contacts with the 16S rRNA in the 70S ribosome. This Caldivirga maquilingensis (strain ATCC 700844 / DSM 13496 / JCM 10307 / IC-167) protein is Large ribosomal subunit protein uL2.